A 150-amino-acid chain; its full sequence is Large ribosomal subunit protein bL9 (150 aa).

It belongs to the bacterial ribosomal protein bL9 family.

Functionally, binds to the 23S rRNA. The chain is Large ribosomal subunit protein bL9 from Pseudarthrobacter chlorophenolicus (strain ATCC 700700 / DSM 12829 / CIP 107037 / JCM 12360 / KCTC 9906 / NCIMB 13794 / A6) (Arthrobacter chlorophenolicus).